A 416-amino-acid polypeptide reads, in one-letter code: Gamma-glutamyl phosphate reductase (416 aa).

It belongs to the gamma-glutamyl phosphate reductase family.

It localises to the cytoplasm. The enzyme catalyses L-glutamate 5-semialdehyde + phosphate + NADP(+) = L-glutamyl 5-phosphate + NADPH + H(+). It functions in the pathway amino-acid biosynthesis; L-proline biosynthesis; L-glutamate 5-semialdehyde from L-glutamate: step 2/2. In terms of biological role, catalyzes the NADPH-dependent reduction of L-glutamate 5-phosphate into L-glutamate 5-semialdehyde and phosphate. The product spontaneously undergoes cyclization to form 1-pyrroline-5-carboxylate. In Leptospira interrogans serogroup Icterohaemorrhagiae serovar copenhageni (strain Fiocruz L1-130), this protein is Gamma-glutamyl phosphate reductase.